Here is a 66-residue protein sequence, read N- to C-terminus: Protein translocase subunit SecE (66 aa).

The helical transmembrane segment at 29-49 (LVASTLVVVVAVFIFSPICLV) threads the bilayer.

Belongs to the SecE/SEC61-gamma family. As to quaternary structure, component of the Sec protein translocase complex. Heterotrimer consisting of SecY, SecE and SecG subunits. The heterotrimers can form oligomers, although 1 heterotrimer is thought to be able to translocate proteins. Interacts with the ribosome. Interacts with SecDF, and other proteins may be involved. Interacts with SecA.

Its subcellular location is the cell inner membrane. Its function is as follows. Essential subunit of the Sec protein translocation channel SecYEG. Clamps together the 2 halves of SecY. May contact the channel plug during translocation. In Rickettsia montanensis, this protein is Protein translocase subunit SecE.